Here is a 269-residue protein sequence, read N- to C-terminus: Aegyptin-like protein (269 aa).

The first 19 residues, 1–19 (MKLLLLLASVLCLALIVSA), serve as a signal peptide directing secretion. Residues 19 to 152 (ARPSDETTDQ…GGAEGGEESP (134 aa)) are disordered. The GE-rich region which mediates binding of Ca(2+) stretch occupies residues 38 to 148 (TSDSYHQEED…AGEEGGAEGG (111 aa)). Composition is skewed to acidic residues over residues 56–73 (GTED…ESSS), 98–121 (GEED…EGGA), and 131–149 (GGAD…EGGE). The mediates binding of host collagen and inhibition of platelet aggregation stretch occupies residues 148 to 269 (GEESPVNTYH…DCIVEKRDSE (122 aa)). 2 cysteine pairs are disulfide-bonded: cysteine 208/cysteine 261 and cysteine 230/cysteine 239.

It belongs to the aegyptin family. Female saliva (at protein level). Distal lateral lobes of female salivary gland (at protein level). Low-level expression in male salivary gland. Not detected in female and male carcasses.

The protein resides in the secreted. Modulates blood feeding of female mosquitoes on vertebrate hosts. Inhibits collagen-induced platelet aggregation in the host via preventing collagen interaction with its ligands: glycoprotein VI and integrin alpha-2/beta-1 (ITGA2/ITGB1). Inhibits collagen-induced increase of Ca(2+) levels in host platelets. Binds to host collagens. Binds Ca(2+). Prevents a decrease in platelet count in the host blood after collagen injection. In terms of biological role, (Microbial infection) Does not affect the development of Plasmodium berghei parasites in mosquitoes. The chain is Aegyptin-like protein from Anopheles stephensi (Indo-Pakistan malaria mosquito).